Reading from the N-terminus, the 605-residue chain is Hepatocyte nuclear factor 1-alpha-A (605 aa).

The tract at residues 1-31 (MASQLSYLQRELLQALLESGVTKEALKKALA) is dimerization. Residues 1-32 (MASQLSYLQRELLQALLESGVTKEALKKALAD) enclose the HNF-p1 domain. The segment at 57–81 (QLPNGLGESHISEDESSDDGEDFTP) is disordered. Residues 85 to 180 (KELERLSPEE…IARLFTFTEF (96 aa)) enclose the POU-specific atypical domain. Interaction with DNA regions lie at residues 128-130 (QRE), 141-147 (HLSQHLN), 153-156 (KTQK), 206-209 (RFKW), 266-268 (RVY), and 273-276 (NRRK). A Nuclear localization signal motif is present at residues 200–208 (KKMRRNRFK). A DNA-binding region (homeobox; HNF1-type) is located at residues 202–282 (MRRNRFKWGP…NRRKEEAFRH (81 aa)). The span at 321–335 (DRSAVMANSQSTPSP) shows a compositional bias: polar residues. The segment at 321 to 343 (DRSAVMANSQSTPSPSALEPSHS) is disordered. A not present in other members of the HNF1 family region spans residues 448–453 (PSHQLH).

The protein belongs to the HNF1 homeobox family. Binds DNA as dimer. Forms a homodimer or heterodimer with HNF1-alpha-B. Potentially also form a heterodimer with HNF1-beta. Protein expressed in liver, stomach, small intestine, colon and kidney. Not expressed in spleen, lung, blood, heart muscle, skeletal muscle, testis and brain.

It is found in the nucleus. Transcriptional activator that regulates the tissue specific expression of multiple genes, especially in pancreas and liver. Binds to the hepatocyte specific promoter element HP1. Binds to the inverted palindrome 5'-GTTAATNATTAAC-3'. The polypeptide is Hepatocyte nuclear factor 1-alpha-A (hnf1a-a) (Xenopus laevis (African clawed frog)).